Reading from the N-terminus, the 329-residue chain is MLESMYYEFFFIFPKERELFESFLLDTTHLALEESSLENLKAFDDKETIEFVSQSSWRYFATHDPLKENLKEKPPHLKNFVILRSEKNLSDSLFPALEAFCLNLKQSLQSEFDFFYLSRNLASKDWLEAYKQAVLPVRCAKFYIHPSWHQKPSHAAIDDCIMIDPALAFGSGHHESTSMCLELLSSLDLKRKNALDVGCGSGILSIALKKQGVSALTACDTDSLAVEETLKNFSLNQIPLLAQDKVIYGSTQKIEGRFDIIVANLVADVIKSLYSEFVRLCNHTLILSGILETHLNSVLQIYYNGFEVLEQRQRNEWVALKLLKKQSIN.

S-adenosyl-L-methionine-binding residues include threonine 177, glycine 198, aspartate 220, and asparagine 264.

The protein belongs to the methyltransferase superfamily. PrmA family.

Its subcellular location is the cytoplasm. The catalysed reaction is L-lysyl-[protein] + 3 S-adenosyl-L-methionine = N(6),N(6),N(6)-trimethyl-L-lysyl-[protein] + 3 S-adenosyl-L-homocysteine + 3 H(+). In terms of biological role, methylates ribosomal protein L11. In Helicobacter pylori (strain J99 / ATCC 700824) (Campylobacter pylori J99), this protein is Ribosomal protein L11 methyltransferase.